A 1790-amino-acid polypeptide reads, in one-letter code: Cytokinesis protein sepA (1790 aa).

Disordered stretches follow at residues 1 to 275 and 328 to 350; these read MPTS…YLTR and GEQKRKQKARETHGYDGPSGILE. A compositionally biased stretch (basic and acidic residues) spans 24-35; sequence ERPVEDRWDAHG. 2 stretches are compositionally biased toward low complexity: residues 39–62 and 187–203; these read SLAPPSSAAGSRSSRYSKRSSIQS and SHHSSSTVDSSTNSRMS. A compositionally biased stretch (polar residues) spans 205–236; that stretch reads DQASIHSSLSSNTRGSSYISTDGSSRTTLPSH. Positions 274 to 702 constitute a GBD/FH3 domain; that stretch reads TRPRDDRVVD…YVAMDRRLPD (429 aa). The segment covering 328–341 has biased composition (basic and acidic residues); the sequence is GEQKRKQKARETHG. A coiled-coil region spans residues 724 to 811; sequence AEARRAYDES…QRNELETREL (88 aa). An FH1 domain is found at 955-1136; sequence DPEQATGLLG…NYLASQGAPS (182 aa). A compositionally biased stretch (basic and acidic residues) spans 975-986; the sequence is ADDAKDEGKPTE. Disordered regions lie at residues 975-1119, 1465-1484, and 1596-1790; these read ADDA…PPGT, NLSDPKKFHPQDRVSQITQR, and RAAA…PSTS. Pro residues-rich tracts occupy residues 1015–1026 and 1033–1118; these read APPPPPPPPPAH and APPP…PPPG. Residues 1141-1564 enclose the FH2 domain; that stretch reads VMSSIRPKKK…TEASLARKRI (424 aa). Residues 1435 to 1566 adopt a coiled-coil conformation; the sequence is LQKLNVDQLR…ASLARKRINV (132 aa). The DAD domain occupies 1581 to 1613; it reads SPATSGAMDSLLEKLRAAAPQAKDQRDRRRRAR. Positions 1608 to 1620 are enriched in basic residues; sequence RRRRARLKERHQV. A compositionally biased stretch (polar residues) spans 1644–1661; that stretch reads SGATDTNATDSSLLSPTI. Residues 1694–1710 show a composition bias toward basic and acidic residues; that stretch reads PDPERTRRRRESAEEER. The span at 1720-1746 shows a compositional bias: polar residues; the sequence is GATSGSKDSNDTTPLSPVTEPTSTQGE.

This sequence belongs to the formin homology family. BNI1 subfamily.

Functionally, involved in cytokinesis. Overexpression results in growth inhibition. This Emericella nidulans (strain FGSC A4 / ATCC 38163 / CBS 112.46 / NRRL 194 / M139) (Aspergillus nidulans) protein is Cytokinesis protein sepA (sepA).